Reading from the N-terminus, the 592-residue chain is Guanylate-binding protein 1 (592 aa).

The tract at residues 1-311 (MASEIHMTGP…NAISSGDLPC (311 aa)) is GTPase domain (Globular). Residues 35 to 278 (TQPMVVVAIV…FCSYIFSNSK (244 aa)) enclose the GB1/RHD3-type G domain. Residues 45-52 (GLYRTGKS), 67-69 (LGS), and 97-101 (DTEGL) each bind GTP. Phosphoserine; by PIM1 is present on S156. (Microbial infection) Glycyl lysine isopeptide (Lys-Gly) (interchain with G-Cter in ubiquitin) cross-links involve residues K207, K209, K210, K382, K562, K567, K573, and K587. Position 589 is a cysteine methyl ester (C589). C589 carries the S-farnesyl cysteine lipid modification. The residue at position 590 (T590) is a Phosphothreonine; by PIM1. Positions 590-592 (TIS) are cleaved as a propeptide — removed in mature form.

Belongs to the TRAFAC class dynamin-like GTPase superfamily. GB1/RHD3 GTPase family. GB1 subfamily. In terms of assembly, homodimer; homodimerization occurs upon GTP-binding and is required for the second hydrolysis step from GDP to GMP. Undergoes conformational changes and oligomerization upon GTP-binding and hydrolysis. Heterodimer with other family members, including GBP2, GBP3, GBP4 and GBP5. Dimerization regulates subcellular location to membranous structures. Interacts with SQSTM1. Interacts (when phosphorylated) with 14-3-3 protein sigma (SFN); leading to GBP1 retention in the cytosol and inactivation. Isoprenylation is required for proper subcellular location. In terms of processing, phosphorylated at Ser-156 by PIM1 in absence of infection, inhibits GBP1: phosphorylation promotes interaction with 14-3-3 protein sigma (SFN), leading to GBP1 retention in the cytosol. Dephosphorylated in response to infection, liberating GBP1. Post-translationally, (Microbial infection) Ubiquitinated by S.flexneri IpaH9.8, leading to its degradation by the proteasome, thereby preventing its ability to promote host defense against bacterial infection.

It localises to the cytoplasmic vesicle membrane. The protein localises to the golgi apparatus membrane. The protein resides in the cell membrane. It is found in the cytoplasm. Its subcellular location is the cytosol. It localises to the secreted. It catalyses the reaction GTP + H2O = GDP + phosphate + H(+). The enzyme catalyses GDP + H2O = GMP + phosphate + H(+). In terms of biological role, interferon (IFN)-inducible GTPase that plays important roles in innate immunity against a diverse range of bacterial, viral and protozoan pathogens. Hydrolyzes GTP to GMP in two consecutive cleavage reactions: GTP is first hydrolyzed to GDP and then to GMP in a processive manner. Following infection, recruited to the pathogen-containing vacuoles or vacuole-escaped bacteria and promotes both inflammasome assembly and autophagy. Acts as a positive regulator of inflammasome assembly by facilitating the detection of inflammasome ligands from pathogens. Involved in the lysis of pathogen-containing vacuoles, releasing pathogens into the cytosol. Following pathogen release in the cytosol, forms a protein coat in a GTPase-dependent manner that encapsulates pathogens and promotes the detection of ligands by pattern recognition receptors. Plays a key role in inflammasome assembly in response to infection by Gram-negative bacteria: following pathogen release in the cytosol, forms a protein coat that encapsulates Gram-negative bacteria and directly binds to lipopolysaccharide (LPS), disrupting the O-antigen barrier and unmasking lipid A that is that detected by the non-canonical inflammasome effector CASP4/CASP11. Also promotes recruitment of proteins that mediate bacterial cytolysis, leading to release double-stranded DNA (dsDNA) that activates the AIM2 inflammasome. Involved in autophagy by regulating bacteriolytic peptide generation via its interaction with ubiquitin-binding protein SQSTM1, which delivers monoubiquitinated proteins to autolysosomes for the generation of bacteriolytic peptides. Confers protection to several pathogens, including the bacterial pathogens L.monocytogenes and M.bovis BCG as well as the protozoan pathogen T.gondii. Exhibits antiviral activity against influenza virus. This is Guanylate-binding protein 1 from Homo sapiens (Human).